The following is a 166-amino-acid chain: MDLQSRLEALIAPSLDAMGYELVRVQLQGKQRLTLQIMADRKDGVMMAVDDCADISRSVSALLDVEDPISAAYTLEVSSPGIDRPLTRAKDFVAWAGFEAKMESCQPIDGRKRFRGKLLGLDEAGVNVRLVIEAAGEIAIPLADVRGAKLVLTDELIAATLKDQEE.

Belongs to the RimP family.

It localises to the cytoplasm. Functionally, required for maturation of 30S ribosomal subunits. This is Ribosome maturation factor RimP from Paramagnetospirillum magneticum (strain ATCC 700264 / AMB-1) (Magnetospirillum magneticum).